The chain runs to 233 residues: Ribonuclease 3 (233 aa).

Residues 5-127 enclose the RNase III domain; sequence LERLCRKLGY…VIGAVYLDGG (123 aa). Residue glutamate 40 coordinates Mg(2+). Residue aspartate 44 is part of the active site. Mg(2+) contacts are provided by aspartate 113 and glutamate 116. The active site involves glutamate 116. A DRBM domain is found at 156–226; it reads DPKTRLQEYL…ATRALALLLA (71 aa).

The protein belongs to the ribonuclease III family. Homodimer. Mg(2+) is required as a cofactor.

The protein resides in the cytoplasm. The catalysed reaction is Endonucleolytic cleavage to 5'-phosphomonoester.. Digests double-stranded RNA. Involved in the processing of primary rRNA transcript to yield the immediate precursors to the large and small rRNAs (23S and 16S). Processes some mRNAs, and tRNAs when they are encoded in the rRNA operon. Processes pre-crRNA and tracrRNA of type II CRISPR loci if present in the organism. The sequence is that of Ribonuclease 3 from Nitrosococcus oceani (strain ATCC 19707 / BCRC 17464 / JCM 30415 / NCIMB 11848 / C-107).